Reading from the N-terminus, the 338-residue chain is MLSALARPASAALRRSFSTSAQNNAKVAVLGASGGIGQPLSLLLKNSPLVSRLTLYDIAHTPGVAADLSHIETKAVVKGYLGPEQLPDCLKGCDVVVIPAGVPRKPGMTRDDLFNTNATIVATLAAACAQHRPEAMICIIANPVNSTIPITAEVFKKHGVYNPSKIFGVTTLDIVRANTFVAELKGLDPARVNVPVIGGHAGKTIIPLISQCTPKVDFPQDQLTALTGRIQEAGTEVVKAKAGAGSATLSMAYAGARFVFSLVDAMNGKEGVVECSFVKSQETECTYFSTPLLLGKKGIEKNLGIGQIPSFEEKMISDAIPELKASIKKGEDFVKTLK.

A mitochondrion-targeting transit peptide spans 1–24 (MLSALARPASAALRRSFSTSAQNN). Residues 31–37 (GASGGIG) and D57 contribute to the NAD(+) site. Residue S33 is glycosylated (O-linked (GlcNAc) serine). K78 and K91 each carry N6-acetyllysine; alternate. Residues K78 and K91 each carry the N6-succinyllysine; alternate modification. Residues R104 and R110 each coordinate substrate. NAD(+) contacts are provided by residues N117 and 140–142 (IAN). N142 is a binding site for substrate. K165 carries the N6-acetyllysine modification. R176 serves as a coordination point for substrate. K185 carries the N6-acetyllysine; alternate modification. N6-succinyllysine; alternate is present on K185. The active-site Proton acceptor is H200. K203 bears the N6-succinyllysine mark. Residues K215 and K239 each carry the N6-acetyllysine; alternate modification. N6-succinyllysine; alternate is present on residues K215 and K239. K239 bears the N6-malonyllysine; alternate mark. S246 is subject to Phosphoserine. Residue M251 coordinates NAD(+). Position 269 is an N6-succinyllysine (K269). 4 positions are modified to N6-acetyllysine; alternate: K296, K301, K314, and K324. N6-succinyllysine; alternate occurs at positions 296, 301, 314, and 324. At S326 the chain carries Phosphoserine. 3 positions are modified to N6-acetyllysine; alternate: K328, K329, and K335. K328 is modified (N6-succinyllysine; alternate). K329 carries the post-translational modification N6-malonyllysine; alternate. Position 335 is an N6-succinyllysine; alternate (K335).

It belongs to the LDH/MDH superfamily. MDH type 1 family. In terms of assembly, homodimer. Acetylation is enhanced after treatment either with trichostin A (TCA) or with nicotinamide (NAM) with the appearance of tri- and tetraacetylations. Glucose also increases acetylation.

It localises to the mitochondrion matrix. The catalysed reaction is (S)-malate + NAD(+) = oxaloacetate + NADH + H(+). Enzyme activity is enhanced by acetylation. In Macaca fascicularis (Crab-eating macaque), this protein is Malate dehydrogenase, mitochondrial (MDH2).